A 244-amino-acid chain; its full sequence is UPF0173 metal-dependent hydrolase RoseRS_3945 (244 aa).

It belongs to the UPF0173 family.

The chain is UPF0173 metal-dependent hydrolase RoseRS_3945 from Roseiflexus sp. (strain RS-1).